The sequence spans 162 residues: Interleukin-2 (162 aa).

Positions 1–20 (MYKIQLLSCIALTLALVANG) are cleaved as a signal peptide. Residue Thr-23 is glycosylated (O-linked (GalNAc...) threonine). Residue Asn-70 is glycosylated (N-linked (GlcNAc...) asparagine). The cysteines at positions 79 and 134 are disulfide-linked.

The protein belongs to the IL-2 family.

It localises to the secreted. Functionally, cytokine produced by activated CD4-positive helper T-cells and to a lesser extend activated CD8-positive T-cells and natural killer (NK) cells that plays pivotal roles in the immune response and tolerance. Binds to a receptor complex composed of either the high-affinity trimeric IL-2R (IL2RA/CD25, IL2RB/CD122 and IL2RG/CD132) or the low-affinity dimeric IL-2R (IL2RB and IL2RG). Interaction with the receptor leads to oligomerization and conformation changes in the IL-2R subunits resulting in downstream signaling starting with phosphorylation of JAK1 and JAK3. In turn, JAK1 and JAK3 phosphorylate the receptor to form a docking site leading to the phosphorylation of several substrates including STAT5. This process leads to activation of several pathways including STAT, phosphoinositide-3-kinase/PI3K and mitogen-activated protein kinase/MAPK pathways. Functions as a T-cell growth factor and can increase NK-cell cytolytic activity as well. Promotes strong proliferation of activated B-cells and subsequently immunoglobulin production. Plays a pivotal role in regulating the adaptive immune system by controlling the survival and proliferation of regulatory T-cells, which are required for the maintenance of immune tolerance. Moreover, participates in the differentiation and homeostasis of effector T-cell subsets, including Th1, Th2, Th17 as well as memory CD8-positive T-cells. The polypeptide is Interleukin-2 (IL2) (Cervus elaphus (Red deer)).